Reading from the N-terminus, the 416-residue chain is Dihydroorotase (416 aa).

Zn(2+) contacts are provided by His53 and His55. Residues 55-57 (HLR) and Asn87 contribute to the substrate site. Asp145, His172, His225, and Asp298 together coordinate Zn(2+). Asp298 is a catalytic residue. His302 contributes to the substrate binding site.

The protein belongs to the metallo-dependent hydrolases superfamily. DHOase family. Class I DHOase subfamily. The cofactor is Zn(2+).

It catalyses the reaction (S)-dihydroorotate + H2O = N-carbamoyl-L-aspartate + H(+). The protein operates within pyrimidine metabolism; UMP biosynthesis via de novo pathway; (S)-dihydroorotate from bicarbonate: step 3/3. Functionally, catalyzes the reversible cyclization of carbamoyl aspartate to dihydroorotate. The protein is Dihydroorotase of Deinococcus radiodurans (strain ATCC 13939 / DSM 20539 / JCM 16871 / CCUG 27074 / LMG 4051 / NBRC 15346 / NCIMB 9279 / VKM B-1422 / R1).